Consider the following 723-residue polypeptide: Aminodeoxychorismate synthase (723 aa).

A Glutamine amidotransferase type-1 domain is found at 2–195; that stretch reads RTLLVDNYDS…RDLTERHGRT (194 aa). The active-site Nucleophile is Cys-82. The interval 96–117 is disordered; it reads VGRAPEPRHGRTSAVRHDGTGL. Residues 98 to 114 show a composition bias toward basic and acidic residues; it reads RAPEPRHGRTSAVRHDG. Active-site residues include His-169 and Glu-171. 2 disordered regions span residues 192-219 and 693-723; these read HGRT…KATT and FPGR…VLPG. The interval 255 to 723 is PABB component; that stretch reads LDSSRPGGEL…GAPKDLVLPG (469 aa). The span at 695-704 shows a compositional bias: basic and acidic residues; that stretch reads GRERPGKDLD.

It in the C-terminal section; belongs to the anthranilate synthase component I family.

The enzyme catalyses chorismate + L-glutamine = 4-amino-4-deoxychorismate + L-glutamate. It functions in the pathway antibiotic biosynthesis; candicidin biosynthesis. Its function is as follows. Involved in candicidin biosynthesis. Catalyzes the biosynthesis of 4-amino-4-deoxychorismate (ADC) from chorismate and glutamine. The sequence is that of Aminodeoxychorismate synthase from Streptomyces griseus.